A 129-amino-acid polypeptide reads, in one-letter code: C-phycocyanin beta subunit (129 aa).

An N4-methylasparagine modification is found at Asn62. Cys116 is a (2R,3E)-phycocyanobilin binding site.

The protein belongs to the phycobiliprotein family. In terms of assembly, heterodimer of an alpha and a beta subunit, which further assembles into trimers and the trimers into hexamers. In terms of processing, two isomers exist. Post-translationally, contains two covalently linked bilin chromophores.

It localises to the cellular thylakoid membrane. Its function is as follows. Light-harvesting photosynthetic bile pigment-protein from the phycobiliprotein complex (phycobilisome, PBS). Phycocyanin is the major phycobiliprotein in the PBS rod. This chain is C-phycocyanin beta subunit, found in Aphanizomenon flos-aquae.